We begin with the raw amino-acid sequence, 95 residues long: Aspartyl/glutamyl-tRNA(Asn/Gln) amidotransferase subunit C (95 aa).

This sequence belongs to the GatC family. As to quaternary structure, heterotrimer of A, B and C subunits.

The enzyme catalyses L-glutamyl-tRNA(Gln) + L-glutamine + ATP + H2O = L-glutaminyl-tRNA(Gln) + L-glutamate + ADP + phosphate + H(+). The catalysed reaction is L-aspartyl-tRNA(Asn) + L-glutamine + ATP + H2O = L-asparaginyl-tRNA(Asn) + L-glutamate + ADP + phosphate + 2 H(+). Its function is as follows. Allows the formation of correctly charged Asn-tRNA(Asn) or Gln-tRNA(Gln) through the transamidation of misacylated Asp-tRNA(Asn) or Glu-tRNA(Gln) in organisms which lack either or both of asparaginyl-tRNA or glutaminyl-tRNA synthetases. The reaction takes place in the presence of glutamine and ATP through an activated phospho-Asp-tRNA(Asn) or phospho-Glu-tRNA(Gln). The chain is Aspartyl/glutamyl-tRNA(Asn/Gln) amidotransferase subunit C from Methylobacillus flagellatus (strain ATCC 51484 / DSM 6875 / VKM B-1610 / KT).